The following is a 364-amino-acid chain: tRNA 2-selenouridine synthase (364 aa).

Residues Leu-14 to Trp-137 enclose the Rhodanese domain. Catalysis depends on Cys-97, which acts as the S-selanylcysteine intermediate.

This sequence belongs to the SelU family. As to quaternary structure, monomer.

The enzyme catalyses 5-methylaminomethyl-2-thiouridine(34) in tRNA + selenophosphate + (2E)-geranyl diphosphate + H2O + H(+) = 5-methylaminomethyl-2-selenouridine(34) in tRNA + (2E)-thiogeraniol + phosphate + diphosphate. It catalyses the reaction 5-methylaminomethyl-2-thiouridine(34) in tRNA + (2E)-geranyl diphosphate = 5-methylaminomethyl-S-(2E)-geranyl-thiouridine(34) in tRNA + diphosphate. The catalysed reaction is 5-methylaminomethyl-S-(2E)-geranyl-thiouridine(34) in tRNA + selenophosphate + H(+) = 5-methylaminomethyl-2-(Se-phospho)selenouridine(34) in tRNA + (2E)-thiogeraniol. It carries out the reaction 5-methylaminomethyl-2-(Se-phospho)selenouridine(34) in tRNA + H2O = 5-methylaminomethyl-2-selenouridine(34) in tRNA + phosphate. In terms of biological role, involved in the post-transcriptional modification of the uridine at the wobble position (U34) of tRNA(Lys), tRNA(Glu) and tRNA(Gln). Catalyzes the conversion of 2-thiouridine (S2U-RNA) to 2-selenouridine (Se2U-RNA). Acts in a two-step process involving geranylation of 2-thiouridine (S2U) to S-geranyl-2-thiouridine (geS2U) and subsequent selenation of the latter derivative to 2-selenouridine (Se2U) in the tRNA chain. This is tRNA 2-selenouridine synthase from Salmonella paratyphi B (strain ATCC BAA-1250 / SPB7).